Reading from the N-terminus, the 357-residue chain is GPI mannosyltransferase 2 (357 aa).

8 helical membrane passes run 6–26 (TLIV…LVVP), 86–106 (AIAY…ALML), 128–148 (ILSP…FALL), 167–187 (VLGA…PFLF), 201–221 (GVSV…TQYL), 257–277 (YWTA…YLMY), 286–306 (LVPF…MWHV), and 334–354 (YVVR…GAYL).

Belongs to the PIGV family.

It is found in the endoplasmic reticulum membrane. It participates in glycolipid biosynthesis; glycosylphosphatidylinositol-anchor biosynthesis. Its function is as follows. Mannosyltransferase involved in glycosylphosphatidylinositol-anchor biosynthesis. Transfers the second mannose to the glycosylphosphatidylinositol during GPI precursor assembly. This Yarrowia lipolytica (strain CLIB 122 / E 150) (Yeast) protein is GPI mannosyltransferase 2 (GPI18).